Reading from the N-terminus, the 98-residue chain is Large ribosomal subunit protein uL23 (98 aa).

This sequence belongs to the universal ribosomal protein uL23 family. In terms of assembly, part of the 50S ribosomal subunit. Contacts protein L29, and trigger factor when it is bound to the ribosome.

In terms of biological role, one of the early assembly proteins it binds 23S rRNA. One of the proteins that surrounds the polypeptide exit tunnel on the outside of the ribosome. Forms the main docking site for trigger factor binding to the ribosome. In Gluconacetobacter diazotrophicus (strain ATCC 49037 / DSM 5601 / CCUG 37298 / CIP 103539 / LMG 7603 / PAl5), this protein is Large ribosomal subunit protein uL23.